A 695-amino-acid polypeptide reads, in one-letter code: NADPH--cytochrome P450 reductase (695 aa).

Residues 1-8 (MAQLDTLD) are Lumenal-facing. The chain crosses the membrane as a helical span at residues 9-31 (IVVLVVLLVGSVAYFTKGSYWAV). Residues 32-695 (PKDPYAAANS…SGSYQEDVWS (664 aa)) lie on the Cytoplasmic side of the membrane. The Flavodoxin-like domain occupies 66 to 221 (CVIFYGSQTG…DFLAWKEPMW (156 aa)). Residues 72–77 (SQTGTA), 123–126 (ATYG), 169–178 (LGNNTYEHYN), and aspartate 204 each bind FMN. An FAD-binding FR-type domain is found at 277–538 (HNPYIAPIVE…HVRHSNFKLP (262 aa)). Position 296 (arginine 296) interacts with NADP(+). FAD contacts are provided by residues 451–454 (RYYS), 469–471 (TAV), and 486–489 (GVTT). Residues threonine 552, 614–615 (SR), 620–624 (KVYVQ), and glutamate 656 contribute to the NADP(+) site. Tryptophan 694 is an FAD binding site.

This sequence belongs to the NADPH--cytochrome P450 reductase family. The protein in the N-terminal section; belongs to the flavodoxin family. In the C-terminal section; belongs to the flavoprotein pyridine nucleotide cytochrome reductase family. It depends on FAD as a cofactor. FMN is required as a cofactor.

It is found in the endoplasmic reticulum membrane. It localises to the mitochondrion outer membrane. The protein resides in the cell membrane. The enzyme catalyses 2 oxidized [cytochrome P450] + NADPH = 2 reduced [cytochrome P450] + NADP(+) + H(+). This enzyme is required for electron transfer from NADP to cytochrome P450 in microsomes. It can also provide electron transfer to heme oxygenase and cytochrome B5. Involved in ergosterol biosynthesis. This is NADPH--cytochrome P450 reductase from Aspergillus fumigatus (strain ATCC MYA-4609 / CBS 101355 / FGSC A1100 / Af293) (Neosartorya fumigata).